Consider the following 636-residue polypeptide: Zinc finger protein 90 (636 aa).

The 72-residue stretch at Val14 to Pro85 folds into the KRAB domain. 7 C2H2-type zinc fingers span residues Tyr208–His230, His250–His272, Phe278–His300, Tyr306–His328, Tyr334–His356, Phe362–His384, and Phe390–His412. A disordered region spans residues Glu227–Arg247. Lys444 participates in a covalent cross-link: Glycyl lysine isopeptide (Lys-Gly) (interchain with G-Cter in SUMO2). 6 consecutive C2H2-type zinc fingers follow at residues Tyr446–His468, Tyr494–His516, Tyr522–His544, Tyr550–His572, Tyr578–His600, and Tyr606–His628.

Belongs to the krueppel C2H2-type zinc-finger protein family. As to quaternary structure, interacts (via N- and C-termini) with REST (via zinc-finger DNA-binding domain); the interaction inhibits REST repressor activity. In terms of tissue distribution, brain, spleen, thymus, and testis. Expressed in heart.

It localises to the nucleus. In terms of biological role, inhibits the transcriptional repressor activity of REST by inhibiting its binding to DNA, thereby derepressing transcription of REST target genes. The protein is Zinc finger protein 90 (Zfp90) of Mus musculus (Mouse).